Reading from the N-terminus, the 124-residue chain is Small ribosomal subunit protein uS12 (124 aa).

Position 89 is a 3-methylthioaspartic acid (Asp89).

Belongs to the universal ribosomal protein uS12 family. In terms of assembly, part of the 30S ribosomal subunit. Contacts proteins S8 and S17. May interact with IF1 in the 30S initiation complex.

Functionally, with S4 and S5 plays an important role in translational accuracy. In terms of biological role, interacts with and stabilizes bases of the 16S rRNA that are involved in tRNA selection in the A site and with the mRNA backbone. Located at the interface of the 30S and 50S subunits, it traverses the body of the 30S subunit contacting proteins on the other side and probably holding the rRNA structure together. The combined cluster of proteins S8, S12 and S17 appears to hold together the shoulder and platform of the 30S subunit. The chain is Small ribosomal subunit protein uS12 from Buchnera aphidicola subsp. Schizaphis graminum (strain Sg).